Here is a 291-residue protein sequence, read N- to C-terminus: Methionine aminopeptidase (291 aa).

Substrate is bound at residue histidine 118. Residues aspartate 135, aspartate 146, and histidine 209 each coordinate a divalent metal cation. Histidine 216 is a substrate binding site. A divalent metal cation is bound by residues glutamate 241 and glutamate 273.

It belongs to the peptidase M24A family. Methionine aminopeptidase type 1 subfamily. In terms of assembly, monomer. The cofactor is Co(2+). It depends on Zn(2+) as a cofactor. Mn(2+) is required as a cofactor. Requires Fe(2+) as cofactor.

It catalyses the reaction Release of N-terminal amino acids, preferentially methionine, from peptides and arylamides.. Functionally, removes the N-terminal methionine from nascent proteins. The N-terminal methionine is often cleaved when the second residue in the primary sequence is small and uncharged (Met-Ala-, Cys, Gly, Pro, Ser, Thr, or Val). Requires deformylation of the N(alpha)-formylated initiator methionine before it can be hydrolyzed. In Chlamydia trachomatis serovar D (strain ATCC VR-885 / DSM 19411 / UW-3/Cx), this protein is Methionine aminopeptidase.